A 112-amino-acid polypeptide reads, in one-letter code: uncharacterized protein (112 aa).

The chain crosses the membrane as a helical span at residues 75-95 (ILGVFGGFIYILTPLPIVSGF).

It localises to the membrane. This is an uncharacterized protein from Methanocaldococcus jannaschii (strain ATCC 43067 / DSM 2661 / JAL-1 / JCM 10045 / NBRC 100440) (Methanococcus jannaschii).